A 1818-amino-acid chain; its full sequence is Cytadherence high molecular weight protein 2 (1818 aa).

Coiled-coil stretches lie at residues 31–880 (LESA…KQRE), 919–1607 (ELKI…DNKH), 1644–1755 (HLFE…QAVQ), and 1786–1817 (LATQQSISKQQQIAQLNAEINSIKKLIAQKAA).

In terms of processing, phosphorylated mainly on serine residues.

In terms of biological role, component of the cytoskeleton-like structure which stabilizes the shape of the wall-less Mycoplasma. This cytoskeleton-like network of accessory proteins containing HMW proteins 1 to 5 allows the proper anchoring of cytadhesin proteins in the mycoplasmal membrane at the attachment organelle. The protein is Cytadherence high molecular weight protein 2 (hmw2) of Mycoplasma pneumoniae (strain ATCC 29342 / M129 / Subtype 1) (Mycoplasmoides pneumoniae).